The following is an 89-amino-acid chain: Ubiquinol-cytochrome-c reductase complex assembly factor 3 (89 aa).

The Mitochondrial matrix segment spans residues 1 to 7; it reads MEAARKA. Residues 8–28 traverse the membrane as a helical segment; sequence LAVVAVLGAGGGVGSILFALV. Residues 23–80 are mediates lipid-binding; sequence ILFALVTPGELQKQLMLQEMPERDSRRRDEAVRTKELVMATLKDAAATKENVAWRRNW. The Mitochondrial intermembrane portion of the chain corresponds to 29 to 89; the sequence is TPGELQKQLM…WTVRGDGRSA (61 aa).

Belongs to the UQCC3 family. As to quaternary structure, associates with the ubiquinol-cytochrome c reductase complex (mitochondrial respiratory chain complex III(CIII) or cytochrome b-c1 complex). Interacts with UQCC1. Forms a complex, named COMC, composed of UQCC1, UQCC2; UQCC3 and UQCC4; mediates MT-CYB hemylation and association with the first nuclear-encoded complex III subunit UQCRQ. In terms of processing, probably cleaved by OMA1 under mitochondrial stress conditions.

The protein resides in the mitochondrion inner membrane. Its function is as follows. Required for the assembly of the ubiquinol-cytochrome c reductase complex (mitochondrial respiratory chain complex III or cytochrome b-c1 complex), mediating cytochrome b recruitment and probably stabilization within the complex. Thereby, plays an important role in ATP production by mitochondria. Cardiolipin-binding protein, it may also control the cardiolipin composition of mitochondria membranes and their morphology. This Rattus norvegicus (Rat) protein is Ubiquinol-cytochrome-c reductase complex assembly factor 3.